Reading from the N-terminus, the 390-residue chain is Scoulerine-9-O-methyltransferase 1 (390 aa).

Glutamate 153 provides a ligand contact to substrate. S-adenosyl-L-methionine is bound by residues methionine 207, serine 211, glycine 235, aspartate 258, 278-279 (DM), and lysine 292. Catalysis depends on histidine 296, which acts as the Proton acceptor. Position 296-297 (296-297 (HD)) interacts with substrate.

Belongs to the class I-like SAM-binding methyltransferase superfamily. Cation-independent O-methyltransferase family. COMT subfamily. In terms of assembly, homodimer. As to expression, highly expressed in capsules. Expressed is stems. Expressed at low levels in roots.

The catalysed reaction is (S)-scoulerine + S-adenosyl-L-methionine = (S)-tetrahydrocolumbamine + S-adenosyl-L-homocysteine + H(+). The enzyme catalyses (S)-tetrahydrocolumbamine + S-adenosyl-L-methionine = (S)-tetrahydropalmatine + S-adenosyl-L-homocysteine + H(+). It catalyses the reaction (S)-norreticuline + S-adenosyl-L-methionine = (S)-norcodamine + S-adenosyl-L-homocysteine + H(+). It carries out the reaction (S)-reticuline + S-adenosyl-L-methionine = (S)-codamine + S-adenosyl-L-homocysteine + H(+). The protein operates within alkaloid biosynthesis. In terms of biological role, methyltransferase involved in the biosynthesis of the benzylisoquinoline alkaloid noscapine. Catalyzes the conversion of (S)-scoulerine to (S)-tetrahydrocolumbamine. Can convert (S)-tetrahydrocolumbamine to tetrahydropalmatine. Can convert (S)-norreticuline to (S)-norcodamine. Can convert (S)-reticuline to (S)-codamine. Substrate preference is (S)-scoulerine &gt; (S)-tetrahydrocolumbamine &gt; (S)-norreticuline &gt; (S)-reticuline. The chain is Scoulerine-9-O-methyltransferase 1 from Papaver somniferum (Opium poppy).